We begin with the raw amino-acid sequence, 224 residues long: CASP-like protein 3A1 (224 aa).

The Cytoplasmic segment spans residues Met-1–His-59. The chain crosses the membrane as a helical span at residues Val-60 to Ala-80. Over Gln-81 to Glu-106 the chain is Extracellular. Residues Tyr-107–Met-127 traverse the membrane as a helical segment. Residues Ser-128–His-142 lie on the Cytoplasmic side of the membrane. The helical transmembrane segment at Ala-143–Ala-163 threads the bilayer. Topologically, residues Ala-164–Asp-192 are extracellular. The N-linked (GlcNAc...) asparagine glycan is linked to Asn-171. The chain crosses the membrane as a helical span at residues His-193–Val-213. The Cytoplasmic segment spans residues Gln-214–Tyr-224.

The protein belongs to the Casparian strip membrane proteins (CASP) family. As to quaternary structure, homodimer and heterodimers.

Its subcellular location is the cell membrane. This Populus trichocarpa (Western balsam poplar) protein is CASP-like protein 3A1.